We begin with the raw amino-acid sequence, 140 residues long: ATP synthase epsilon chain (140 aa).

This sequence belongs to the ATPase epsilon chain family. F-type ATPases have 2 components, CF(1) - the catalytic core - and CF(0) - the membrane proton channel. CF(1) has five subunits: alpha(3), beta(3), gamma(1), delta(1), epsilon(1). CF(0) has three main subunits: a, b and c.

The protein localises to the cell inner membrane. Produces ATP from ADP in the presence of a proton gradient across the membrane. The sequence is that of ATP synthase epsilon chain from Sodalis glossinidius (strain morsitans).